The sequence spans 79 residues: Acyl carrier protein (79 aa).

In terms of domain architecture, Carrier spans methionine 1–asparagine 77. At serine 37 the chain carries O-(pantetheine 4'-phosphoryl)serine.

Belongs to the acyl carrier protein (ACP) family. Post-translationally, 4'-phosphopantetheine is transferred from CoA to a specific serine of apo-ACP by AcpS. This modification is essential for activity because fatty acids are bound in thioester linkage to the sulfhydryl of the prosthetic group.

It localises to the cytoplasm. It functions in the pathway lipid metabolism; fatty acid biosynthesis. Functionally, carrier of the growing fatty acid chain in fatty acid biosynthesis. In Buchnera aphidicola subsp. Schizaphis graminum (strain Sg), this protein is Acyl carrier protein.